Consider the following 375-residue polypeptide: V-type proton ATPase subunit C (375 aa).

Belongs to the V-ATPase C subunit family. As to quaternary structure, V-ATPase is a heteromultimeric enzyme composed of a peripheral catalytic V1 complex (components A to H) attached to an integral membrane V0 proton pore complex (components: a, c, c'', d and e). In terms of processing, phosphorylated on Ser/Thr residues by WNK8.

It localises to the vacuole membrane. In terms of biological role, subunit of the peripheral V1 complex of vacuolar ATPase. Subunit C is necessary for the assembly of the catalytic sector of the enzyme and is likely to have a specific function in its catalytic activity. V-ATPase is responsible for acidifying a variety of intracellular compartments in eukaryotic cells. This chain is V-type proton ATPase subunit C (VHA-C), found in Arabidopsis thaliana (Mouse-ear cress).